We begin with the raw amino-acid sequence, 293 residues long: Phosphate import ATP-binding protein PstB (293 aa).

Positions 46 to 288 (MTCRKVDVHY…PGHQLTEDYI (243 aa)) constitute an ABC transporter domain. 78-85 (GPSGCGKS) is an ATP binding site.

The protein belongs to the ABC transporter superfamily. Phosphate importer (TC 3.A.1.7) family. In terms of assembly, the complex is composed of two ATP-binding proteins (PstB), two transmembrane proteins (PstC and PstA) and a solute-binding protein (PstS).

The protein resides in the cell inner membrane. The catalysed reaction is phosphate(out) + ATP + H2O = ADP + 2 phosphate(in) + H(+). Functionally, part of the ABC transporter complex PstSACB involved in phosphate import. Responsible for energy coupling to the transport system. This chain is Phosphate import ATP-binding protein PstB, found in Desulfotalea psychrophila (strain LSv54 / DSM 12343).